The following is a 174-amino-acid chain: Small t antigen (174 aa).

N-acetylmethionine; by host is present on Met-1. Residues 12–75 (QLMDLLGLER…VKYAHQPDFG (64 aa)) enclose the J domain. Residues 103–116 (CAKKMSANCICLLC) form a C4-type; atypical zinc finger. The H1C3-type; atypical zinc-finger motif lies at 122–143 (HENRKLYRKDPLVWVDCYCFDC).

As to quaternary structure, interacts with host PPP2R1A; the interaction inhibits PP2A activity.

The protein resides in the host cytoplasm. Its subcellular location is the host nucleus. Its function is as follows. Promotes efficient viral genome replication by accelerating both G1 and S phase progression of the cell cycle. Inhibits host PP2A by binding to the A subunit, thereby displacing lower affinity regulatory B subunit. Inactivation of PP2A in turn results in the transactivation of cyclin A and cyclin D1 promoters. Late during the infection cycle, ST may induce dephosphorylation of host eIF4E-binding protein EIF4EBP1 leading to the inhibition of cap-dependent translation. May establish and maintain high levels of viral genomes during persistent infection in cell culture. This Simian virus 40 (SV40) protein is Small t antigen.